Consider the following 294-residue polypeptide: Putative pyruvate, phosphate dikinase regulatory protein (294 aa).

156–163 serves as a coordination point for ADP; that stretch reads GVSRSGKT.

Belongs to the pyruvate, phosphate/water dikinase regulatory protein family. PDRP subfamily.

The enzyme catalyses N(tele)-phospho-L-histidyl/L-threonyl-[pyruvate, phosphate dikinase] + ADP = N(tele)-phospho-L-histidyl/O-phospho-L-threonyl-[pyruvate, phosphate dikinase] + AMP + H(+). It carries out the reaction N(tele)-phospho-L-histidyl/O-phospho-L-threonyl-[pyruvate, phosphate dikinase] + phosphate + H(+) = N(tele)-phospho-L-histidyl/L-threonyl-[pyruvate, phosphate dikinase] + diphosphate. Bifunctional serine/threonine kinase and phosphorylase involved in the regulation of the pyruvate, phosphate dikinase (PPDK) by catalyzing its phosphorylation/dephosphorylation. The sequence is that of Putative pyruvate, phosphate dikinase regulatory protein from Cutibacterium acnes (strain DSM 16379 / KPA171202) (Propionibacterium acnes).